The primary structure comprises 100 residues: Urease subunit gamma (100 aa).

This sequence belongs to the urease gamma subunit family. In terms of assembly, heterotrimer of UreA (gamma), UreB (beta) and UreC (alpha) subunits. Three heterotrimers associate to form the active enzyme.

The protein localises to the cytoplasm. It catalyses the reaction urea + 2 H2O + H(+) = hydrogencarbonate + 2 NH4(+). The protein operates within nitrogen metabolism; urea degradation; CO(2) and NH(3) from urea (urease route): step 1/1. This Proteus hauseri protein is Urease subunit gamma.